A 353-amino-acid polypeptide reads, in one-letter code: Photosystem II D2 protein (353 aa).

T2 carries the N-acetylthreonine modification. T2 carries the post-translational modification Phosphothreonine. The helical transmembrane segment at 41-61 threads the bilayer; that stretch reads CAYFALGGWFTGTTFVTSWYT. Chlorophyll a is bound at residue H118. Residues 125–141 form a helical membrane-spanning segment; the sequence is GFMLRQFELARSVQLRP. 2 residues coordinate pheophytin a: Q130 and N143. The helical transmembrane segment at 153–166 threads the bilayer; the sequence is VFVSVFLIYPLGQS. H198 serves as a coordination point for chlorophyll a. A helical transmembrane segment spans residues 208–228; that stretch reads AALLCAIHGATVENTLFEDGD. H215 and F262 together coordinate a plastoquinone. H215 contacts Fe cation. Position 269 (H269) interacts with Fe cation. The helical transmembrane segment at 279-295 threads the bilayer; it reads GLWMSALGVVGLALNLR.

Belongs to the reaction center PufL/M/PsbA/D family. In terms of assembly, PSII is composed of 1 copy each of membrane proteins PsbA, PsbB, PsbC, PsbD, PsbE, PsbF, PsbH, PsbI, PsbJ, PsbK, PsbL, PsbM, PsbT, PsbX, PsbY, PsbZ, Psb30/Ycf12, at least 3 peripheral proteins of the oxygen-evolving complex and a large number of cofactors. It forms dimeric complexes. Interacts with PAM68. The D1/D2 heterodimer binds P680, chlorophylls that are the primary electron donor of PSII, and subsequent electron acceptors. It shares a non-heme iron and each subunit binds pheophytin, quinone, additional chlorophylls, carotenoids and lipids. There is also a Cl(-1) ion associated with D1 and D2, which is required for oxygen evolution. The PSII complex binds additional chlorophylls, carotenoids and specific lipids. serves as cofactor. Post-translationally, phosphorylation occurs in normal plant growth light conditions. Rapid dephosphorylation occurs during heat shock.

The protein localises to the plastid. The protein resides in the chloroplast thylakoid membrane. The enzyme catalyses 2 a plastoquinone + 4 hnu + 2 H2O = 2 a plastoquinol + O2. In terms of biological role, photosystem II (PSII) is a light-driven water:plastoquinone oxidoreductase that uses light energy to abstract electrons from H(2)O, generating O(2) and a proton gradient subsequently used for ATP formation. It consists of a core antenna complex that captures photons, and an electron transfer chain that converts photonic excitation into a charge separation. The D1/D2 (PsbA/PsbD) reaction center heterodimer binds P680, the primary electron donor of PSII as well as several subsequent electron acceptors. D2 is needed for assembly of a stable PSII complex. The protein is Photosystem II D2 protein of Arabidopsis thaliana (Mouse-ear cress).